Reading from the N-terminus, the 492-residue chain is MKIEMKNISKSFGTNKVLEAIDLPINSGEVHALMGENGAGKSTLMNILTGLFPASGGEIEIDKEDKTFKNPQEAEGFGISFIHQEMNTWPDLTVLENLFLGREIKNKFGVLDTKAMRKKATFAFEQLGVTIDLDKEIGNLSVGQQQMVEIAKSFLSDLKILIMDEPTAALTERETERLFSVIAGLKAQGVGIIYISHRMEEIFKITDCVTVMRDGLVIDTKKTKETNVDELVRKMVGRSITDYYPQKNAEIREIVFEAENLSTADFKNISFSVRSGEILGFAGLMGAGRTEVMRAIFGIDKLKSGTIKINGKSLTINNPAQAIKAGIGFLTEDRKDEGLVLDFSIKDNITLPSTKDFIHHGLFDDKTATTFVKQLSERLNVKATDEEQMVGSLSGGNQQKVVLAKWIGIAPKVLILDEPTRGVDVGAKREIYQLMNELAERGVPIIMISSDLPEILGVADRIAVMHEGKIAGFLNKKEATQENVMQLATGGK.

ABC transporter domains lie at 3 to 239 (IEMK…VGRS) and 249 to 492 (AEIR…TGGK). 35 to 42 (GENGAGKS) serves as a coordination point for ATP.

This sequence belongs to the ABC transporter superfamily. Ribose importer (TC 3.A.1.2.1) family. In terms of assembly, the complex is composed of an ATP-binding protein (RbsA), two transmembrane proteins (RbsC) and a solute-binding protein (RbsB).

The protein localises to the cell membrane. It catalyses the reaction D-ribose(out) + ATP + H2O = D-ribose(in) + ADP + phosphate + H(+). Part of the ABC transporter complex RbsABC involved in ribose import. Responsible for energy coupling to the transport system. The polypeptide is Ribose import ATP-binding protein RbsA (Lactococcus lactis subsp. cremoris (strain SK11)).